Here is a 702-residue protein sequence, read N- to C-terminus: SAGA complex subunit NGG1 (702 aa).

Positions methionine 1–leucine 10 are enriched in basic residues. Disordered stretches follow at residues methionine 1–leucine 29 and leucine 90–proline 224. 2 stretches are compositionally biased toward basic and acidic residues: residues proline 11–glycine 22 and leucine 90–glutamate 108. Polar residues predominate over residues threonine 109–threonine 125. Serine 134 is modified (phosphoserine). Over residues methionine 162–proline 219 the composition is skewed to basic and acidic residues. Serine 407 carries the post-translational modification Phosphoserine. At threonine 464 the chain carries Phosphothreonine. Positions lysine 606–histidine 618 match the Nuclear localization signal motif. 2 disordered regions span residues proline 611–glutamine 636 and asparagine 672–asparagine 702. Over residues alanine 620 to glutamine 636 the composition is skewed to polar residues. Residues aspartate 680–aspartate 689 are compositionally biased toward acidic residues.

This sequence belongs to the NGG1 family. As to quaternary structure, component of the 1.8 MDa SAGA (Spt-Ada-Gcn5 acetyltransferase) complex, which is composed of 19 subunits TRA1, SPT7, TAF5, NGG1/ADA3, SGF73, SPT20/ADA5, SPT8, TAF12, TAF6, HFI1/ADA1, UBP8, GCN5, ADA2, SPT3, SGF29, TAF10, TAF9, SGF11 and SUS1. The SAGA complex is composed of 4 modules, namely the HAT (histone acetyltransferase) module (GCN5, ADA2, NGG1/ADA3 and SGF29), the DUB (deubiquitinating) module (UBP8, SGF11, SGF73 and SUS1), the core or TAF (TBP-associated factor) module (TAF5, TAF6, TAF9, TAF10 and TAF12), and the Tra1 or SPT (Suppressor of Ty) module (TRA1, HFI1/ADA1, SPT3, SPT7, SPT8 and SPT20/ADA5). The Tra1/SPT module binds activators, the core module recruits TBP (TATA-binding protein), the HAT module contains the histone H3 acetyltransferase GCN5, and the DUB module comprises the histone H2B deubiquitinase UBP8. Also identified in an altered form of SAGA, named SALSA (SAGA altered, Spt8 absent) or SLIK (SAGA-like) complex, which contains a C-terminal truncated form of SPT7 and is missing SPT8. However, it has been shown that the SAGA and SAGA-like SALSA/SLIK transcriptional coactivators are structurally and biochemically equivalent. Component of the 0.8 MDa ADA complex, a HAT complex distinct from SAGA, which at least consists of ADA2, NGG1/ADA3, AHC1, AHC2, SGF29 and GCN5. Identified in an Ada.spt complex with SPT7 and TRA1. Component of an ADA/GCN5 complex that consists of HFI1/ADA1, ADA2, NGG1/ADA3, SPT20/ADA5 and GCN5 and probably is a subcomplex of SAGA.

The protein resides in the nucleus. Functionally, component of the transcription coactivator SAGA complex. SAGA acts as a general cofactor required for essentially all RNA polymerase II transcription. At the promoters, SAGA is required for transcription pre-initiation complex (PIC) recruitment. It influences RNA polymerase II transcriptional activity through different activities such as TBP interaction (via core/TAF module) and promoter selectivity, interaction with transcription activators (via Tra1/SPT module), and chromatin modification through histone acetylation (via HAT module) and deubiquitination (via DUB module). SAGA preferentially acetylates histones H3 (to form H3K9ac, H3K14ac, H3K18ac and H3K23ac) and H2B and deubiquitinates histone H2B. SAGA interacts with DNA via upstream activating sequences (UASs). Also identified in a modified version of SAGA named SALSA or SLIK. The cleavage of SPT7 and the absence of the SPT8 subunit in SLIK neither drive any major conformational differences in its structure compared with SAGA, nor significantly affect HAT, DUB, or DNA-binding activities. Component of the ADA histone acetyltransferase complex, which preferentially acetylates nucleosomal histones H3 (to form H3K14ac and H3K18ac) and H2B. May be involved in response to DNA damage by genotoxic agents. This Saccharomyces cerevisiae (strain ATCC 204508 / S288c) (Baker's yeast) protein is SAGA complex subunit NGG1 (NGG1).